Here is a 593-residue protein sequence, read N- to C-terminus: NADH-quinone oxidoreductase subunit C/D (593 aa).

The NADH dehydrogenase I subunit C stretch occupies residues 1-184 (MTADSALYIP…DPYSLSAAKQ (184 aa)). The interval 208 to 593 (DYMFLNLGPN…IDFVMADVDR (386 aa)) is NADH dehydrogenase I subunit D.

The protein in the N-terminal section; belongs to the complex I 30 kDa subunit family. It in the C-terminal section; belongs to the complex I 49 kDa subunit family. As to quaternary structure, NDH-1 is composed of 13 different subunits. Subunits NuoB, CD, E, F, and G constitute the peripheral sector of the complex.

Its subcellular location is the cell inner membrane. The catalysed reaction is a quinone + NADH + 5 H(+)(in) = a quinol + NAD(+) + 4 H(+)(out). Functionally, NDH-1 shuttles electrons from NADH, via FMN and iron-sulfur (Fe-S) centers, to quinones in the respiratory chain. The immediate electron acceptor for the enzyme in this species is believed to be ubiquinone. Couples the redox reaction to proton translocation (for every two electrons transferred, four hydrogen ions are translocated across the cytoplasmic membrane), and thus conserves the redox energy in a proton gradient. The protein is NADH-quinone oxidoreductase subunit C/D of Pseudomonas paraeruginosa (strain DSM 24068 / PA7) (Pseudomonas aeruginosa (strain PA7)).